A 430-amino-acid chain; its full sequence is Tol-Pal system protein TolB (430 aa).

Positions 1–21 (MKQALRVAFGFLILWASVLHA) are cleaved as a signal peptide.

Belongs to the TolB family. The Tol-Pal system is composed of five core proteins: the inner membrane proteins TolA, TolQ and TolR, the periplasmic protein TolB and the outer membrane protein Pal. They form a network linking the inner and outer membranes and the peptidoglycan layer.

The protein resides in the periplasm. Functionally, part of the Tol-Pal system, which plays a role in outer membrane invagination during cell division and is important for maintaining outer membrane integrity. TolB occupies a key intermediary position in the Tol-Pal system because it communicates directly with both membrane-embedded components, Pal in the outer membrane and TolA in the inner membrane. This is Tol-Pal system protein TolB from Shigella dysenteriae serotype 1 (strain Sd197).